We begin with the raw amino-acid sequence, 456 residues long: Probable hexose phosphate transport protein (456 aa).

Transmembrane regions (helical) follow at residues 34-54, 70-90, 113-133, 161-181, 185-205, 257-277, 302-322, 331-351, 362-382, 394-414, and 421-441; these read IFYSMFFGYVFFYFTRKSFTF, LGIIGSTLYITYGISKFVSGV, IFFGLSSTVPLFVLFWGINGW, VWSTSHNIGGALIPVLTGIAI, GWRGAMFIPGIICIIMGFILI, YVLSNKWLWFLSFASFFIYVV, LCVSLFEIGGLFGMLLAGWLS, GPMNVVFSLGLLFSILGLWGT, AFLFIIGFFLFGPQMMIGLAA, ASGFTGWFAYFGAAFAGYPLG, and GWHGFFVALLACALIALLFFL.

Belongs to the major facilitator superfamily. Organophosphate:Pi antiporter (OPA) (TC 2.A.1.4) family.

The protein resides in the cell membrane. Transport protein for sugar phosphate uptake. In Chlamydia muridarum (strain MoPn / Nigg), this protein is Probable hexose phosphate transport protein.